The sequence spans 354 residues: DNA integrity scanning protein DisA (354 aa).

Positions 6-144 (GIGIKNVLKI…GDIKYVLRES (139 aa)) constitute a DAC domain. Residues glycine 73, leucine 91, and 104–108 (TRHRT) each bind ATP.

It belongs to the DisA family. In terms of assembly, homooctamer. Requires Mg(2+) as cofactor.

The catalysed reaction is 2 ATP = 3',3'-c-di-AMP + 2 diphosphate. Its function is as follows. Participates in a DNA-damage check-point that is active prior to asymmetric division when DNA is damaged. DisA forms globular foci that rapidly scan along the chromosomes during sporulation, searching for lesions. When a lesion is present, DisA pauses at the lesion site. This triggers a cellular response that culminates in a temporary block in sporulation initiation. In terms of biological role, also has diadenylate cyclase activity, catalyzing the condensation of 2 ATP molecules into cyclic di-AMP (c-di-AMP). c-di-AMP acts as a signaling molecule that couples DNA integrity with progression of sporulation. The rise in c-di-AMP level generated by DisA while scanning the chromosome, operates as a positive signal that advances sporulation; upon encountering a lesion, the DisA focus arrests at the damaged site and halts c-di-AMP synthesis. This Clostridium beijerinckii (strain ATCC 51743 / NCIMB 8052) (Clostridium acetobutylicum) protein is DNA integrity scanning protein DisA.